The sequence spans 214 residues: Thiamine-phosphate synthase (214 aa).

Residues 40–44 (QLREK) and Asn72 contribute to the 4-amino-2-methyl-5-(diphosphooxymethyl)pyrimidine site. The Mg(2+) site is built by Asp73 and Asp92. Ser110 contributes to the 4-amino-2-methyl-5-(diphosphooxymethyl)pyrimidine binding site. Position 137-139 (137-139 (SPT)) interacts with 2-[(2R,5Z)-2-carboxy-4-methylthiazol-5(2H)-ylidene]ethyl phosphate. Lys140 is a 4-amino-2-methyl-5-(diphosphooxymethyl)pyrimidine binding site. 2-[(2R,5Z)-2-carboxy-4-methylthiazol-5(2H)-ylidene]ethyl phosphate is bound by residues Gly167 and 185–186 (IS).

This sequence belongs to the thiamine-phosphate synthase family. It depends on Mg(2+) as a cofactor.

The enzyme catalyses 2-[(2R,5Z)-2-carboxy-4-methylthiazol-5(2H)-ylidene]ethyl phosphate + 4-amino-2-methyl-5-(diphosphooxymethyl)pyrimidine + 2 H(+) = thiamine phosphate + CO2 + diphosphate. It carries out the reaction 2-(2-carboxy-4-methylthiazol-5-yl)ethyl phosphate + 4-amino-2-methyl-5-(diphosphooxymethyl)pyrimidine + 2 H(+) = thiamine phosphate + CO2 + diphosphate. It catalyses the reaction 4-methyl-5-(2-phosphooxyethyl)-thiazole + 4-amino-2-methyl-5-(diphosphooxymethyl)pyrimidine + H(+) = thiamine phosphate + diphosphate. It functions in the pathway cofactor biosynthesis; thiamine diphosphate biosynthesis; thiamine phosphate from 4-amino-2-methyl-5-diphosphomethylpyrimidine and 4-methyl-5-(2-phosphoethyl)-thiazole: step 1/1. Condenses 4-methyl-5-(beta-hydroxyethyl)thiazole monophosphate (THZ-P) and 2-methyl-4-amino-5-hydroxymethyl pyrimidine pyrophosphate (HMP-PP) to form thiamine monophosphate (TMP). The chain is Thiamine-phosphate synthase from Wolinella succinogenes (strain ATCC 29543 / DSM 1740 / CCUG 13145 / JCM 31913 / LMG 7466 / NCTC 11488 / FDC 602W) (Vibrio succinogenes).